The chain runs to 575 residues: Proline--tRNA ligase (575 aa).

Belongs to the class-II aminoacyl-tRNA synthetase family. ProS type 1 subfamily. In terms of assembly, homodimer.

The protein localises to the cytoplasm. It catalyses the reaction tRNA(Pro) + L-proline + ATP = L-prolyl-tRNA(Pro) + AMP + diphosphate. Functionally, catalyzes the attachment of proline to tRNA(Pro) in a two-step reaction: proline is first activated by ATP to form Pro-AMP and then transferred to the acceptor end of tRNA(Pro). As ProRS can inadvertently accommodate and process non-cognate amino acids such as alanine and cysteine, to avoid such errors it has two additional distinct editing activities against alanine. One activity is designated as 'pretransfer' editing and involves the tRNA(Pro)-independent hydrolysis of activated Ala-AMP. The other activity is designated 'posttransfer' editing and involves deacylation of mischarged Ala-tRNA(Pro). The misacylated Cys-tRNA(Pro) is not edited by ProRS. The polypeptide is Proline--tRNA ligase (Desulfitobacterium hafniense (strain DSM 10664 / DCB-2)).